Here is a 563-residue protein sequence, read N- to C-terminus: MKLAYWMYAGPAHIGTLRVASSFKNVHAIMHAPLGDDYFNVMRSMLERERDFTPVTTSIVDRHVLARGSQEKVVENITRKDNEESPDLIILTPTCTSSILQEDLQNFVNRASMSENSTSDVLLADVNHYRVNELQAADRTLEQIVRFYLEKEKSTLFRQGVSSVDDNNKTLTNNFLSIKTEKPSANIIGIFTLGFHNQHDCRELKRLLNNLGIEINEVIPEGGSVKNLKNLPKAWFNIIPYREVGLMSAIYLEKEFNMPYVAVSPIGIIDTAVCIREIERILNKIYFESLEGNVNTQSVLTTNPYFNSHINSTNSETRDHNVKPFDFEFYIENQTRFISQAAWFSRSIDCQNLTGKKAVVFGDATHAAGITKILAREMGIKVVCSGTYCKHDADWFREQVFGFCDQILITDDHTQVGDMIAKLEPSAIFGTQMERHIGKRLDIPCGVISAPVHIQNFPLSYRPFLGYEGTNQIADLVYNSFSLGMEDHLLEIFSGHDTKEPITKSLSTENELNWDAEALKELSNVPGFVRGKVKRNTEKYARQNAIPSITLDVLFAAKEALSA.

Position 36 (Asp-36) interacts with [4Fe-4S] cluster. Asp-349 acts as the Proton donor in catalysis. 484–485 provides a ligand contact to substrate; the sequence is GM.

The protein belongs to the ChlB/BchB/BchZ family. As to quaternary structure, protochlorophyllide reductase is composed of three subunits; ChlL, ChlN and ChlB. Forms a heterotetramer of two ChlB and two ChlN subunits. The cofactor is [4Fe-4S] cluster.

The protein resides in the plastid. It localises to the chloroplast. It catalyses the reaction chlorophyllide a + oxidized 2[4Fe-4S]-[ferredoxin] + 2 ADP + 2 phosphate = protochlorophyllide a + reduced 2[4Fe-4S]-[ferredoxin] + 2 ATP + 2 H2O. Its pathway is porphyrin-containing compound metabolism; chlorophyll biosynthesis (light-independent). Functionally, component of the dark-operative protochlorophyllide reductase (DPOR) that uses Mg-ATP and reduced ferredoxin to reduce ring D of protochlorophyllide (Pchlide) to form chlorophyllide a (Chlide). This reaction is light-independent. The NB-protein (ChlN-ChlB) is the catalytic component of the complex. The sequence is that of Light-independent protochlorophyllide reductase subunit B from Chlamydomonas moewusii (Chlamydomonas eugametos).